The following is a 229-amino-acid chain: Artemin (229 aa).

A1 bears the N-acetylalanine mark. Residues 25–173 enclose the Ferritin-like diiron domain; it reads HNFDPECEKA…DCLSNLHCIG (149 aa).

This sequence belongs to the ferritin family.

In Artemia salina (Brine shrimp), this protein is Artemin.